The following is a 440-amino-acid chain: Tetratricopeptide repeat protein 5 (440 aa).

TPR repeat units lie at residues 7–61 (EEVK…EEVV), 68–98 (AQVL…AVKL), 103–130 (VEAW…SGAL), 136–174 (KVSL…AVQM), and 179–216 (GRSW…AEKV). The short motif at 13-24 (LQKLQELVDQLY) is the Nuclear export signal element. Ser-203 carries the phosphoserine; by ATM modification. The residue at position 221 (Ser-221) is a Phosphoserine; by CHEK2. The TPR 6 repeat unit spans residues 224–253 (PDLHLNRATLHKYEENYGEALEGFSRAAAL). The interval 285–287 (KTK) is mediates interaction with 28S rRNA of ribosome-coding tubulin.

Interacts with JMY and p300/EP300; the interaction occurs in the nucleus and augments the association between JMY and p300/EP300 in response to DNA damage. Interacts with PRMT5; the interaction is DNA damage-dependent and promotes PRMT5 interaction with p53/TP53 and subsequent methylation. Forms a complex with HSF1 and p300/EP300; these interactions augment chromatin-bound HSF1 and p300/EP300 histone acetyltransferase activity, resulting in enhanced heat-shock-responsive transcription. Interacts with JMY; the interaction occurs in the cytoplasm and results in the inhibition of JYM's nucleation activity. Interacts with ribosome-coding tubulin (via 60S subunit 28S rRNA and protein uL24/RPL26) and the N-terminal of nascent tubulin polypeptide (via alpha-tubulin MREC motif and beta-tubulin MREI motif); these interactions result in tubulin mRNA-targeted degradation. Interacts with ATP5F1B; the interaction occurs in the mitochondria and results in ATP production decrease. Interacts with p53/TP53; the interaction occurs in the mitochondria and results in increased apoptosis. In terms of processing, phosphorylation by ATM kinase induces nuclear accumulation while interfering with nuclear export, and phosphorylation by CHEK2 kinase enhances nuclear stability.

It localises to the nucleus. The protein resides in the cytoplasm. It is found in the cytoplasmic vesicle. Its subcellular location is the mitochondrion matrix. Cofactor involved in the regulation of various cellular mechanisms such as actin regulation, autophagy, chromatin regulation and DNA repair. In physiological conditions, interacts with cofactor JMY in the cytoplasm which prevents JMY's actin nucleation activity and ability to activate the Arp2/3 complex. Acts as a negative regulator of nutrient stress-induced autophagy by inhibiting JMY's interaction with MAP1LC3B, thereby preventing autophagosome formation. Involves in tubulin autoregulation by promoting its degradation in response to excess soluble tubulin. To do so, associates with the active ribosome near the ribosome exit tunnel and with nascent tubulin polypeptides early during their translation, triggering tubulin mRNA-targeted degradation. Following DNA damage, phosphorylated by DNA damage responsive protein kinases ATM and CHEK2, leading to its nuclear accumulation and stability. Nuclear TTC5/STRAP promotes the assembly of a stress-responsive p53/TP53 coactivator complex, which includes the coactivators JMY and p300, thereby increasing p53/TP53-dependent transcription and apoptosis. Also recruits arginine methyltransferase PRMT5 to p53/TP53 when DNA is damaged, allowing PRMT5 to methylate p53/TP53. In DNA stress conditions, also prevents p53/TP53 degradation by E3 ubiquitin ligase MDM2. Upon heat-shock stress, forms a chromatin-associated complex with heat-shock factor 1 HSF1 and p300/EP300 to stimulate heat-shock-responsive transcription, thereby increasing cell survival. Mitochondrial TTC5/STRAP interacts with ATP synthase subunit beta ATP5F1B which decreased ATP synthase activity and lowers mitochondrial ATP production, thereby regulating cellular respiration and mitochondrial-dependent apoptosis. Mitochondrial TTC5/STRAP also regulates p53/TP53-mediated apoptosis. This is Tetratricopeptide repeat protein 5 (TTC5) from Bos taurus (Bovine).